A 350-amino-acid polypeptide reads, in one-letter code: Ribosomal RNA large subunit methyltransferase M (350 aa).

Residues Ser184, 217 to 220 (APGG), Asp236, Asp256, and Asp272 each bind S-adenosyl-L-methionine. Catalysis depends on Lys301, which acts as the Proton acceptor.

Belongs to the class I-like SAM-binding methyltransferase superfamily. RNA methyltransferase RlmE family. RlmM subfamily. Monomer.

Its subcellular location is the cytoplasm. The enzyme catalyses cytidine(2498) in 23S rRNA + S-adenosyl-L-methionine = 2'-O-methylcytidine(2498) in 23S rRNA + S-adenosyl-L-homocysteine + H(+). In terms of biological role, catalyzes the 2'-O-methylation at nucleotide C2498 in 23S rRNA. The chain is Ribosomal RNA large subunit methyltransferase M from Marinomonas sp. (strain MWYL1).